The chain runs to 365 residues: A-type ATP synthase subunit C (365 aa).

It belongs to the V-ATPase V0D/AC39 subunit family. In terms of assembly, has multiple subunits with at least A(3), B(3), C, D, E, F, H, I and proteolipid K(x).

The protein resides in the cell membrane. Functionally, component of the A-type ATP synthase that produces ATP from ADP in the presence of a proton gradient across the membrane. The protein is A-type ATP synthase subunit C of Thermococcus kodakarensis (strain ATCC BAA-918 / JCM 12380 / KOD1) (Pyrococcus kodakaraensis (strain KOD1)).